Here is a 237-residue protein sequence, read N- to C-terminus: Octopine transport system permease protein OccQ (237 aa).

The ABC transmembrane type-1 domain occupies 22–222 (TGMTVAVASS…LITFISGQAF (201 aa)). The next 4 membrane-spanning stretches (helical) occupy residues 24–44 (MTVAVASSAFTIGLVFGCLGA), 72–92 (LVIYLFYFGSSSLISGVGSLF), 96–116 (GFVSAPAFLTGALAIGLVSAA), and 201–221 (FSFYLTAAALYLLITFISGQA).

This sequence belongs to the binding-protein-dependent transport system permease family. HisMQ subfamily.

Its subcellular location is the cell inner membrane. Component of the octopine active transport system probably consisting of four subunits: Q, M, P and T. This Rhizobium meliloti (Ensifer meliloti) protein is Octopine transport system permease protein OccQ (occQ).